Consider the following 203-residue polypeptide: Large ribosomal subunit protein bL25 (203 aa).

The protein belongs to the bacterial ribosomal protein bL25 family. CTC subfamily. Part of the 50S ribosomal subunit; part of the 5S rRNA/L5/L18/L25 subcomplex. Contacts the 5S rRNA. Binds to the 5S rRNA independently of L5 and L18.

Its function is as follows. This is one of the proteins that binds to the 5S RNA in the ribosome where it forms part of the central protuberance. This Cupriavidus pinatubonensis (strain JMP 134 / LMG 1197) (Cupriavidus necator (strain JMP 134)) protein is Large ribosomal subunit protein bL25.